A 428-amino-acid chain; its full sequence is MFVDQVKIYVKGGDGGNGMVAYRREKYVPKGGPAGGDGGKGADVVFIVEEGLRTLMDFRYQRHFKADRGQHGMSKGQHGRKSEDLLVKVPPGTVVKDEKTGQILADLVTHGQTAVIAKGGRGGRGNSRFATATNPAPEIAENGEPGQERDVILELKVLADVGLVGFPSVGKSTLLSVVSSARPKIAEYHFTTIVPNLGVVETGDNRSFVMADLPGLIEGAHAGVGLGHQFLRHIERTRVIVHVIDMSGLEGRDPYEDYVTINNELKEYNLRLTERPQVVVANKMDMPDAEENLQAFKEKVGDEVKIFPISAVTKQGVRDLLFEVANLIETTPEFPIHEVVDESDTSVMYKFETEGVKFDITRESDGTFVISGYDIEKTFKMTDFSRDESVRRFARQMRGMGIDEALRARGAKDGDIVKILEYEFEFID.

The region spanning 1–158 (MFVDQVKIYV…RDVILELKVL (158 aa)) is the Obg domain. An OBG-type G domain is found at 159-329 (ADVGLVGFPS…LLFEVANLIE (171 aa)). GTP is bound by residues 165 to 172 (GFPSVGKS), 190 to 194 (FTTIV), 212 to 215 (DLPG), 282 to 285 (NKMD), and 310 to 312 (SAV). Residues Ser172 and Thr192 each coordinate Mg(2+). Residues 350-428 (KFETEGVKFD…ILEYEFEFID (79 aa)) enclose the OCT domain.

This sequence belongs to the TRAFAC class OBG-HflX-like GTPase superfamily. OBG GTPase family. In terms of assembly, monomer. Mg(2+) is required as a cofactor.

It is found in the cytoplasm. Its function is as follows. An essential GTPase which binds GTP, GDP and possibly (p)ppGpp with moderate affinity, with high nucleotide exchange rates and a fairly low GTP hydrolysis rate. Plays a role in control of the cell cycle, stress response, ribosome biogenesis and in those bacteria that undergo differentiation, in morphogenesis control. This Bacillus thuringiensis (strain Al Hakam) protein is GTPase Obg.